Consider the following 219-residue polypeptide: MGMSSLKLLKFVLFFFNLIFWFCGCCILGLGIYLLIHSKFGVLFHNLPSLTLGNVLVIVGSVIMVVAFLGCMGSIKENKCLLMSFFVLLLIILLAEVTLAILLFVYEQKLKEYVAEGLTESIQRYNSDNSTKAAWDSIQSFLQCCGVNGTSDWTSGPPASCPKGSAVKGCYIQAKQWFHSNFLYIGITTICVCVIQVLGMSFALTLNCQIDKTSQVLGL.

Topologically, residues 1 to 11 are cytoplasmic; it reads MGMSSLKLLKF. Residues 12 to 32 form a helical membrane-spanning segment; it reads VLFFFNLIFWFCGCCILGLGI. Residues 33 to 54 lie on the Extracellular side of the membrane; that stretch reads YLLIHSKFGVLFHNLPSLTLGN. A helical membrane pass occupies residues 55-69; sequence VLVIVGSVIMVVAFL. Over 70-80 the chain is Cytoplasmic; it reads GCMGSIKENKC. The chain crosses the membrane as a helical span at residues 81–106; it reads LLMSFFVLLLIILLAEVTLAILLFVY. Topologically, residues 107-181 are extracellular; sequence EQKLKEYVAE…IQAKQWFHSN (75 aa). N129 and N148 each carry an N-linked (GlcNAc...) asparagine glycan. A helical membrane pass occupies residues 182 to 206; the sequence is FLYIGITTICVCVIQVLGMSFALTL. Over 207-219 the chain is Cytoplasmic; sequence NCQIDKTSQVLGL.

This sequence belongs to the tetraspanin (TM4SF) family. As to quaternary structure, interacts with SCIMP. Interacts with CD45/PTPRC. Interacts with IL7R. Interacts with RBL2 and PPP2CA.

Its subcellular location is the cell membrane. It is found in the cell junction. The protein resides in the membrane. It localises to the synapse. Structural component of specialized membrane microdomains known as tetraspanin-enriched microdomains (TERMs), which act as platforms for receptor clustering and signaling. Participates thereby in diverse biological functions such as cell signal transduction, adhesion, migration and protein trafficking. Plays a role in the activation of monocytes and B-cells. Acts as an essential regulator of B-cell development by promoting interleukin-7 receptor/IL7R signaling. Also promotes, in B-cells, the BCR signaling by recruiting PKC to the plasma membrane in order to phosphorylate its substrates. Plays an essential role in B- and T-cells homing to lymph nodes by stabilizing L-selectin/SELL cell surface expression. Also mediates metabolic and inflammatory functions in hepatocytes and adipose tissue by promoting TNF-alpha and LPS signaling independent of the immune compartment. This is Leukocyte surface antigen CD53 (CD53) from Bos taurus (Bovine).